Reading from the N-terminus, the 282-residue chain is Shikimate dehydrogenase (NADP(+)) (282 aa).

Shikimate is bound by residues 16–18 (SLS) and T63. K67 functions as the Proton acceptor in the catalytic mechanism. Shikimate contacts are provided by N88 and D103. NADP(+)-binding positions include 128–132 (GAGGA) and G243.

The protein belongs to the shikimate dehydrogenase family. As to quaternary structure, homodimer.

It carries out the reaction shikimate + NADP(+) = 3-dehydroshikimate + NADPH + H(+). It participates in metabolic intermediate biosynthesis; chorismate biosynthesis; chorismate from D-erythrose 4-phosphate and phosphoenolpyruvate: step 4/7. Functionally, involved in the biosynthesis of the chorismate, which leads to the biosynthesis of aromatic amino acids. Catalyzes the reversible NADPH linked reduction of 3-dehydroshikimate (DHSA) to yield shikimate (SA). The polypeptide is Shikimate dehydrogenase (NADP(+)) (Xylella fastidiosa (strain 9a5c)).